The primary structure comprises 723 residues: Polyribonucleotide nucleotidyltransferase (723 aa).

Mg(2+)-binding residues include Asp-488 and Asp-494. The KH domain maps to 555-614 (PKIITLNIKPEKIKDVIGPGGKQINAIIEETGVKIDIEQDGTVYIASQDQAMNRKAIAII). In terms of domain architecture, S1 motif spans 624-692 (GEVYTGKVRR…HQGRVNLSRK (69 aa)). The disordered stretch occupies residues 692–723 (KALLEKKEQPEGDKKPQAEKKFYPKTKKPESK). A compositionally biased stretch (basic and acidic residues) spans 693 to 723 (ALLEKKEQPEGDKKPQAEKKFYPKTKKPESK).

Belongs to the polyribonucleotide nucleotidyltransferase family. Mg(2+) is required as a cofactor.

The protein resides in the cytoplasm. It catalyses the reaction RNA(n+1) + phosphate = RNA(n) + a ribonucleoside 5'-diphosphate. Its function is as follows. Involved in mRNA degradation. Catalyzes the phosphorolysis of single-stranded polyribonucleotides processively in the 3'- to 5'-direction. This is Polyribonucleotide nucleotidyltransferase from Listeria welshimeri serovar 6b (strain ATCC 35897 / DSM 20650 / CCUG 15529 / CIP 8149 / NCTC 11857 / SLCC 5334 / V8).